A 354-amino-acid polypeptide reads, in one-letter code: Probable trehalose-phosphate phosphatase E (354 aa).

It belongs to the trehalose phosphatase family. The cofactor is a divalent metal cation.

It catalyses the reaction alpha,alpha-trehalose 6-phosphate + H2O = alpha,alpha-trehalose + phosphate. It participates in glycan biosynthesis; trehalose biosynthesis. In terms of biological role, removes the phosphate from trehalose 6-phosphate to produce free trehalose. Trehalose accumulation in plant may improve abiotic stress tolerance. This is Probable trehalose-phosphate phosphatase E (TPPE) from Arabidopsis thaliana (Mouse-ear cress).